Here is a 208-residue protein sequence, read N- to C-terminus: Glutathione S-transferase 2 (208 aa).

Residues 1–78 (MSYKLTYFSI…HLARKYNLNG (78 aa)) form the GST N-terminal domain. Glutathione contacts are provided by residues Y7, K42, 49–50 (QL), and 62–63 (QS). The region spanning 80-200 (NEMETTYIDM…YCEKRDAAKV (121 aa)) is the GST C-terminal domain.

The protein belongs to the GST superfamily. Pi family. In terms of assembly, homodimer. In terms of tissue distribution, hypodermis, wall of the seminal receptacle and spermatozoa of adult worms.

The enzyme catalyses RX + glutathione = an S-substituted glutathione + a halide anion + H(+). Functionally, appears to play a central role in the parasite detoxification system. This is Glutathione S-transferase 2 (GST2) from Onchocerca volvulus.